The chain runs to 630 residues: 1,4-alpha-glucan branching enzyme GlgB (630 aa).

Residue Asp311 is the Nucleophile of the active site. The active-site Proton donor is Glu362.

Belongs to the glycosyl hydrolase 13 family. GlgB subfamily. In terms of assembly, monomer.

It catalyses the reaction Transfers a segment of a (1-&gt;4)-alpha-D-glucan chain to a primary hydroxy group in a similar glucan chain.. Its pathway is glycan biosynthesis; glycogen biosynthesis. Functionally, catalyzes the formation of the alpha-1,6-glucosidic linkages in glycogen by scission of a 1,4-alpha-linked oligosaccharide from growing alpha-1,4-glucan chains and the subsequent attachment of the oligosaccharide to the alpha-1,6 position. This Aquifex aeolicus (strain VF5) protein is 1,4-alpha-glucan branching enzyme GlgB.